Consider the following 269-residue polypeptide: MYAASREASSRSREALRAALTGSDSVAATTGSELFAVVAVLDDQRSLRVALADVSVPGSARAELSERVFGGKVSVATQAVLTTAVAQNWSRTSDMVDTLVLLGQEALLESAANAGRLDAVEDELFRLGRIIADNADLEQALSDRAKPAAAKRELIARLLAGKAEPVTISLAEQVVGRNTTRIGAAFDELSDLAAARRDQIVAHVRAAIALTSQQRERLAASLQRIYGKPVTVHVQVDPSLLSGLVVRIGDDVIDGSAVGRLERLRRELA.

The protein belongs to the ATPase delta chain family. In terms of assembly, F-type ATPases have 2 components, F(1) - the catalytic core - and F(0) - the membrane proton channel. F(1) has five subunits: alpha(3), beta(3), gamma(1), delta(1), epsilon(1). F(0) has three main subunits: a(1), b(2) and c(10-14). The alpha and beta chains form an alternating ring which encloses part of the gamma chain. F(1) is attached to F(0) by a central stalk formed by the gamma and epsilon chains, while a peripheral stalk is formed by the delta and b chains.

The protein localises to the cell membrane. In terms of biological role, f(1)F(0) ATP synthase produces ATP from ADP in the presence of a proton or sodium gradient. F-type ATPases consist of two structural domains, F(1) containing the extramembraneous catalytic core and F(0) containing the membrane proton channel, linked together by a central stalk and a peripheral stalk. During catalysis, ATP synthesis in the catalytic domain of F(1) is coupled via a rotary mechanism of the central stalk subunits to proton translocation. This protein is part of the stalk that links CF(0) to CF(1). It either transmits conformational changes from CF(0) to CF(1) or is implicated in proton conduction. This is ATP synthase subunit delta from Nocardia farcinica (strain IFM 10152).